Here is a 166-residue protein sequence, read N- to C-terminus: Putative tRNA (cytidine(34)-2'-O)-methyltransferase (166 aa).

S-adenosyl-L-methionine contacts are provided by leucine 83, glycine 109, isoleucine 130, and serine 138.

Belongs to the class IV-like SAM-binding methyltransferase superfamily. RNA methyltransferase TrmH family. TrmL subfamily.

Its subcellular location is the cytoplasm. It catalyses the reaction cytidine(34) in tRNA + S-adenosyl-L-methionine = 2'-O-methylcytidine(34) in tRNA + S-adenosyl-L-homocysteine + H(+). The catalysed reaction is 5-carboxymethylaminomethyluridine(34) in tRNA(Leu) + S-adenosyl-L-methionine = 5-carboxymethylaminomethyl-2'-O-methyluridine(34) in tRNA(Leu) + S-adenosyl-L-homocysteine + H(+). Could methylate the ribose at the nucleotide 34 wobble position in tRNA. This chain is Putative tRNA (cytidine(34)-2'-O)-methyltransferase, found in Mycoplasma pneumoniae (strain ATCC 29342 / M129 / Subtype 1) (Mycoplasmoides pneumoniae).